The chain runs to 335 residues: Biotin synthase (335 aa).

One can recognise a Radical SAM core domain in the interval 41-269; sequence KQIQVCKLIS…TSDVRLSAGR (229 aa). Cys-56, Cys-60, and Cys-63 together coordinate [4Fe-4S] cluster. Residues Cys-100, Cys-132, Cys-192, and Arg-264 each coordinate [2Fe-2S] cluster.

It belongs to the radical SAM superfamily. Biotin synthase family. As to quaternary structure, homodimer. The cofactor is [4Fe-4S] cluster. [2Fe-2S] cluster serves as cofactor.

It catalyses the reaction (4R,5S)-dethiobiotin + (sulfur carrier)-SH + 2 reduced [2Fe-2S]-[ferredoxin] + 2 S-adenosyl-L-methionine = (sulfur carrier)-H + biotin + 2 5'-deoxyadenosine + 2 L-methionine + 2 oxidized [2Fe-2S]-[ferredoxin]. The protein operates within cofactor biosynthesis; biotin biosynthesis; biotin from 7,8-diaminononanoate: step 2/2. In terms of biological role, catalyzes the conversion of dethiobiotin (DTB) to biotin by the insertion of a sulfur atom into dethiobiotin via a radical-based mechanism. The chain is Biotin synthase from Nostoc sp. (strain PCC 7120 / SAG 25.82 / UTEX 2576).